The following is a 200-amino-acid chain: Probable DNA-directed RNA polymerase subunit delta (200 aa).

One can recognise an HTH HARE-type domain in the interval 19-88 (LSMIEVARAI…GDNKWGLRSW (70 aa)). 2 stretches are compositionally biased toward acidic residues: residues 125 to 143 (DSDA…DAYE) and 150 to 200 (YDDE…TSEE). Positions 125–200 (DSDAIDYNAD…SDDDAETSEE (76 aa)) are disordered.

The protein belongs to the RpoE family. In terms of assembly, RNAP is composed of a core of 2 alpha, a beta and a beta' subunits. The core is associated with a delta subunit and one of several sigma factors.

Its function is as follows. Participates in both the initiation and recycling phases of transcription. In the presence of the delta subunit, RNAP displays an increased specificity of transcription, a decreased affinity for nucleic acids, and an increased efficiency of RNA synthesis because of enhanced recycling. The chain is Probable DNA-directed RNA polymerase subunit delta from Streptococcus pneumoniae serotype 4 (strain ATCC BAA-334 / TIGR4).